The primary structure comprises 248 residues: Acyl-coenzyme A thioesterase THEM5 (248 aa).

The active-site Proton donor/acceptor is the Asp167.

The protein belongs to the THEM4/THEM5 thioesterase family. As to quaternary structure, homodimer.

The protein resides in the mitochondrion matrix. The enzyme catalyses hexadecanoyl-CoA + H2O = hexadecanoate + CoA + H(+). It catalyses the reaction (9Z,12Z)-octadecadienoyl-CoA + H2O = (9Z,12Z)-octadecadienoate + CoA + H(+). The catalysed reaction is tetradecanoyl-CoA + H2O = tetradecanoate + CoA + H(+). It carries out the reaction (9Z)-octadecenoyl-CoA + H2O = (9Z)-octadecenoate + CoA + H(+). The enzyme catalyses (9Z)-hexadecenoyl-CoA + H2O = (9Z)-hexadecenoate + CoA + H(+). It catalyses the reaction (5Z,8Z,11Z,14Z)-eicosatetraenoyl-CoA + H2O = (5Z,8Z,11Z,14Z)-eicosatetraenoate + CoA + H(+). The catalysed reaction is octadecanoyl-CoA + H2O = octadecanoate + CoA + H(+). In terms of biological role, has acyl-CoA thioesterase activity towards long-chain (C16 and C18) fatty acyl-CoA substrates, with a preference for linoleoyl-CoA and other unsaturated long-chain fatty acid-CoA esters. Plays an important role in mitochondrial fatty acid metabolism, and in remodeling of the mitochondrial lipid cardiolipin. Required for normal mitochondrial function. The polypeptide is Acyl-coenzyme A thioesterase THEM5 (Them5) (Mus musculus (Mouse)).